The primary structure comprises 52 residues: ERMES regulator 1 (52 aa).

Residues 1-27 (MIFFFNQIRSIFTALHTPTQQIQLSRR) are Mitochondrial intermembrane-facing. The helical transmembrane segment at 28–46 (AFFQFLGYLGSCVVISLAA) threads the bilayer. The Cytoplasmic segment spans residues 47 to 52 (QSKYVQ).

The protein belongs to the EMR1 family.

Its subcellular location is the mitochondrion outer membrane. Its function is as follows. Mediates the formation of endoplasmic reticulum (ER)-mitochondria encounter structure (ERMES) foci, thereby contributing to the formation of ER-mitochondrial contact sites. In Saccharomyces cerevisiae (strain ATCC 204508 / S288c) (Baker's yeast), this protein is ERMES regulator 1.